A 282-amino-acid chain; its full sequence is MSSSLQELCRKNLPDDILPEFFDDYVLQLLGLHWQDHGSLQRTGKNQVLVQQEPIHINEALKVAASEGNFEIVELLLSWKADPRYAVVGALESKYYDLVYKYYNLIEDRHDMLPLIQNSETFERCHELNNCSLKCLFKHAVIYDKLPILQKYADYLDGWPYCNQMLFELACKKQKYNMVVWIEGVLGVGNFTILFTIAIIKRDLQLYSLGYSIILERMYSCGYDPTFLLNHYLRVVSTKGLLPFVLKTIEYGGSKEIAITLAKKYQHETILRYFETRKSQEC.

Belongs to the asfivirus MGF 505 family.

Functionally, plays a role in virus cell tropism, and may be required for efficient virus replication in macrophages. This chain is Protein MGF 505-3R, found in Ornithodoros (relapsing fever ticks).